We begin with the raw amino-acid sequence, 468 residues long: MSKTYYIISTNDYFDPINLSIKDGGEKTIDIIDCERYTLIDCIIFFCKKESFVIEIIVPDFLTKDKLLCDSENLSLCVVNNIYYMNDISVFDSMSLEKSTLKSLMNWAVKNNYKVLLQKYLDNQNIKIYDLLACGISNSNVCDNILELLLSYCKYFQENETMFLVSFCLEMHRIDIAKTLIMYNSYPSVINKSLNFASKSNMSELAIFLVDNGAEINCDHILCFIRIGDIDTVLYMLCRYDVQKLIDRCHFDLVEAVFNSGSLEMIETFIDFGMKINSKVYQHLKYDSKDTYEILRILLAREIYPRKCSDVLKNAAHICSIDVLKILVDFEFNQKSFDNALVSTINAGKFKNAEYLLFSGANINFNNMPTNCMFKINFQTIKFLIDNNFDLEIHGTLILNKSLLNGYYDCANILIENGVKFSLTKSELLKIYSDFQNTHHGQIDPELNINSLTSDELENLIYIDIVNK.

ANK repeat units follow at residues 12-41, 189-218, 249-278, 336-365, 367-393, and 394-423; these read DYFDPINLSIKDGGEKTIDIIDCERYTLID, VINKSLNFASKSNMSELAIFLVDNGAEINC, CHFDLVEAVFNSGSLEMIETFIDFGMKINS, SFDNALVSTINAGKFKNAEYLLFSGANINF, NMPTNCMFKINFQTIKFLIDNNFDLEI, and HGTLILNKSLLNGYYDCANILIENGVKFSL.

The protein is Putative ankyrin repeat protein R580 of Acanthamoeba polyphaga (Amoeba).